The primary structure comprises 345 residues: Neurotrimin (345 aa).

A signal peptide spans 1–30 (MGVCGSLFLPWKCLVVVSLRLLFLVPTGVP). Ig-like C2-type domains lie at 39–126 (PKAM…PKTS), 136–218 (PKIV…VKVT), and 222–309 (PPYI…ASIT). 3 N-linked (GlcNAc...) asparagine glycosylation sites follow: Asn-44, Asn-70, and Asn-152. A disulfide bridge connects residues Cys-57 and Cys-115. 2 cysteine pairs are disulfide-bonded: Cys-157/Cys-201 and Cys-243/Cys-295. Asn-284, Asn-292, Asn-305, and Asn-321 each carry an N-linked (GlcNAc...) asparagine glycan. The GPI-anchor amidated asparagine moiety is linked to residue Asn-321. The propeptide at 322–345 (GTSSRRAGCLWLLPLLVLHLLLKF) is removed in mature form.

Belongs to the immunoglobulin superfamily. IgLON family.

Its subcellular location is the cell membrane. In terms of biological role, neural cell adhesion molecule. The sequence is that of Neurotrimin (NTM) from Bos taurus (Bovine).